We begin with the raw amino-acid sequence, 275 residues long: Dihydropteroate synthase (275 aa).

The 253-residue stretch at 15 to 267 folds into the Pterin-binding domain; that stretch reads PQIMGILNFT…DVAATSDMLK (253 aa). Asn-22 contributes to the Mg(2+) binding site. (7,8-dihydropterin-6-yl)methyl diphosphate is bound by residues Thr-62, Asp-96, Asn-115, Asp-185, Lys-221, and 255 to 257; that span reads RVH.

The protein belongs to the DHPS family. Homodimer. The cofactor is Mg(2+).

The enzyme catalyses (7,8-dihydropterin-6-yl)methyl diphosphate + 4-aminobenzoate = 7,8-dihydropteroate + diphosphate. It participates in cofactor biosynthesis; tetrahydrofolate biosynthesis; 7,8-dihydrofolate from 2-amino-4-hydroxy-6-hydroxymethyl-7,8-dihydropteridine diphosphate and 4-aminobenzoate: step 1/2. Its function is as follows. Catalyzes the condensation of para-aminobenzoate (pABA) with 6-hydroxymethyl-7,8-dihydropterin diphosphate (DHPt-PP) to form 7,8-dihydropteroate (H2Pte), the immediate precursor of folate derivatives. The polypeptide is Dihydropteroate synthase (folP-A) (Haemophilus influenzae (strain ATCC 51907 / DSM 11121 / KW20 / Rd)).